We begin with the raw amino-acid sequence, 388 residues long: Phosphoglycerate kinase (388 aa).

Residues 21-23, R36, 59-62, R114, and R147 contribute to the substrate site; these read DLN and HLGR. Residues K198, E315, and 341–344 contribute to the ATP site; that span reads GGDT.

Belongs to the phosphoglycerate kinase family. Monomer.

The protein resides in the cytoplasm. The catalysed reaction is (2R)-3-phosphoglycerate + ATP = (2R)-3-phospho-glyceroyl phosphate + ADP. It functions in the pathway carbohydrate degradation; glycolysis; pyruvate from D-glyceraldehyde 3-phosphate: step 2/5. This Buchnera aphidicola subsp. Schizaphis graminum (strain Sg) protein is Phosphoglycerate kinase.